The following is a 318-amino-acid chain: Probable dual-specificity RNA methyltransferase RlmN (318 aa).

The Proton acceptor role is filled by Glu-63. The Radical SAM core domain maps to 69-299 (HDYGRTVCVS…VSLRRELGAD (231 aa)). Cys-76 and Cys-304 are disulfide-bonded. Residues Cys-83, Cys-87, and Cys-90 each coordinate [4Fe-4S] cluster. S-adenosyl-L-methionine-binding positions include 130–131 (GE), Ser-162, 185–187 (SLH), and Asn-261. Residue Cys-304 is the S-methylcysteine intermediate of the active site.

Belongs to the radical SAM superfamily. RlmN family. [4Fe-4S] cluster serves as cofactor.

The protein resides in the cytoplasm. It carries out the reaction adenosine(2503) in 23S rRNA + 2 reduced [2Fe-2S]-[ferredoxin] + 2 S-adenosyl-L-methionine = 2-methyladenosine(2503) in 23S rRNA + 5'-deoxyadenosine + L-methionine + 2 oxidized [2Fe-2S]-[ferredoxin] + S-adenosyl-L-homocysteine. The enzyme catalyses adenosine(37) in tRNA + 2 reduced [2Fe-2S]-[ferredoxin] + 2 S-adenosyl-L-methionine = 2-methyladenosine(37) in tRNA + 5'-deoxyadenosine + L-methionine + 2 oxidized [2Fe-2S]-[ferredoxin] + S-adenosyl-L-homocysteine. Specifically methylates position 2 of adenine 2503 in 23S rRNA and position 2 of adenine 37 in tRNAs. The protein is Probable dual-specificity RNA methyltransferase RlmN of Desulforudis audaxviator (strain MP104C).